We begin with the raw amino-acid sequence, 751 residues long: Diamine oxidase [copper-containing] (751 aa).

The N-terminal stretch at 1–19 (MPALGWAVAAILMLQTAMA) is a signal peptide. Asparagine 110 and asparagine 168 each carry an N-linked (GlcNAc...) asparagine glycan. A disulfide bridge links cysteine 177 with cysteine 181. Catalysis depends on aspartate 373, which acts as the Proton acceptor. Cysteine 391 and cysteine 417 form a disulfide bridge. Tyrosine 461 functions as the Schiff-base intermediate with substrate; via topaquinone in the catalytic mechanism. Position 461 is a 2',4',5'-topaquinone (tyrosine 461). Cu(2+)-binding residues include histidine 510 and histidine 512. Positions 519, 520, and 521 each coordinate Ca(2+). A glycan (N-linked (GlcNAc...) asparagine) is linked at asparagine 538. Ca(2+) contacts are provided by glutamate 562, phenylalanine 653, asparagine 656, glutamate 658, aspartate 664, and leucine 665. Histidine 675 provides a ligand contact to Cu(2+). N-linked (GlcNAc...) asparagine glycosylation is present at asparagine 745.

Belongs to the copper/topaquinone oxidase family. Homodimer; disulfide-linked. Requires Cu(2+) as cofactor. The cofactor is Ca(2+). L-topaquinone is required as a cofactor. In terms of processing, N-glycosylated. Topaquinone (TPQ) is generated by copper-dependent autoxidation of a specific tyrosyl residue. Widely expressed with higher expression in placenta and kidney.

It is found in the secreted. Its subcellular location is the extracellular space. It localises to the cell membrane. The enzyme catalyses histamine + O2 + H2O = imidazole-4-acetaldehyde + H2O2 + NH4(+). It carries out the reaction N(tau)-methylhistamine + O2 + H2O = 1-methylimidazole-4-acetaldehyde + H2O2 + NH4(+). The catalysed reaction is putrescine + O2 + H2O = 4-aminobutanal + H2O2 + NH4(+). It catalyses the reaction cadaverine + O2 + H2O = 5-aminopentanal + H2O2 + NH4(+). With respect to regulation, inhibited by amiloride and amiloride analogs. Inhibited by isoniazid, cimetidine, clonidine, berenil and pentamidine. Catalyzes the oxidative deamination of primary amines to the corresponding aldehydes with the concomitant production of hydrogen peroxide and ammonia. Its preferred substrates are the diamines histamine and 1-methylhistamine and it could therefore play a role in allergic and immune responses. Has a broad specificity for diamines and can also act on cadaverine and putrescine, two products of amino acid catabolism. It could also act on polyamines, like spermidine and spermine though less efficiently, and regulate various biological processes. This chain is Diamine oxidase [copper-containing], found in Homo sapiens (Human).